Here is a 374-residue protein sequence, read N- to C-terminus: UDP-N-acetylglucosamine--N-acetylmuramyl-(pentapeptide) pyrophosphoryl-undecaprenol N-acetylglucosamine transferase (374 aa).

Residues 14-16, Asn-125, Arg-168, Ser-196, and Gln-297 each bind UDP-N-acetyl-alpha-D-glucosamine; that span reads TGG.

Belongs to the glycosyltransferase 28 family. MurG subfamily.

Its subcellular location is the cell inner membrane. It carries out the reaction di-trans,octa-cis-undecaprenyl diphospho-N-acetyl-alpha-D-muramoyl-L-alanyl-D-glutamyl-meso-2,6-diaminopimeloyl-D-alanyl-D-alanine + UDP-N-acetyl-alpha-D-glucosamine = di-trans,octa-cis-undecaprenyl diphospho-[N-acetyl-alpha-D-glucosaminyl-(1-&gt;4)]-N-acetyl-alpha-D-muramoyl-L-alanyl-D-glutamyl-meso-2,6-diaminopimeloyl-D-alanyl-D-alanine + UDP + H(+). It participates in cell wall biogenesis; peptidoglycan biosynthesis. Cell wall formation. Catalyzes the transfer of a GlcNAc subunit on undecaprenyl-pyrophosphoryl-MurNAc-pentapeptide (lipid intermediate I) to form undecaprenyl-pyrophosphoryl-MurNAc-(pentapeptide)GlcNAc (lipid intermediate II). This chain is UDP-N-acetylglucosamine--N-acetylmuramyl-(pentapeptide) pyrophosphoryl-undecaprenol N-acetylglucosamine transferase, found in Rhodopseudomonas palustris (strain BisA53).